Reading from the N-terminus, the 363-residue chain is Ribosomal RNA large subunit methyltransferase M (363 aa).

Residues Ser-194, 227 to 230, Asp-246, Asp-266, and Asp-284 contribute to the S-adenosyl-L-methionine site; that span reads CPGG. Lys-313 functions as the Proton acceptor in the catalytic mechanism.

Belongs to the class I-like SAM-binding methyltransferase superfamily. RNA methyltransferase RlmE family. RlmM subfamily. Monomer.

The protein localises to the cytoplasm. The catalysed reaction is cytidine(2498) in 23S rRNA + S-adenosyl-L-methionine = 2'-O-methylcytidine(2498) in 23S rRNA + S-adenosyl-L-homocysteine + H(+). In terms of biological role, catalyzes the 2'-O-methylation at nucleotide C2498 in 23S rRNA. This Haemophilus influenzae (strain PittGG) protein is Ribosomal RNA large subunit methyltransferase M.